We begin with the raw amino-acid sequence, 2067 residues long: Non-reducing polyketide synthase PKS12 (2067 aa).

Positions 4–241 are N-terminal acylcarrier protein transacylase (SAT) domain; sequence FVFGDQSTRF…LPVPIYAPYH (238 aa). Residues 350 to 373 form a disordered region; the sequence is NSMGPKASTSHSSAETQTESSSKN. Residues 356 to 373 are compositionally biased toward polar residues; it reads ASTSHSSAETQTESSSKN. One can recognise a Ketosynthase family 3 (KS3) domain in the interval 373 to 808; the sequence is NSKIAIVAMS…GGNSAVLLQD (436 aa). Catalysis depends on for beta-ketoacyl synthase activity residues Cys-545, His-680, and His-725. Positions 912–1199 are malonyl-CoA:ACP transacylase (MAT) domain; sequence FVFSGQGAQY…VVCSTFLKSS (288 aa). Ser-1001 serves as the catalytic For acyl/malonyl transferase activity. Residues 1297–1433 form an N-terminal hotdog fold region; sequence QKILQETSLD…CELRLEHPSQ (137 aa). The region spanning 1297-1606 is the PKS/mFAS DH domain; it reads QKILQETSLD…FQGLPRRVLN (310 aa). His-1329 functions as the Proton acceptor; for dehydratase activity in the catalytic mechanism. Residues 1329–1604 are product template (PT) domain; sequence HRVNGVKVCT…ITFQGLPRRV (276 aa). Positions 1460 to 1606 are C-terminal hotdog fold; the sequence is LDSMLATGMV…FQGLPRRVLN (147 aa). Catalysis depends on Asp-1519, which acts as the Proton donor; for dehydratase activity. Residues 1619-1648 form a disordered region; that stretch reads APMGRRDVPPSRMDVPPVRSGEGPPTSAPT. A Carrier domain is found at 1660–1738; the sequence is TSMDSRLRPL…SFKLFLGLVD (79 aa). Ser-1698 is modified (O-(pantetheine 4'-phosphoryl)serine). The disordered stretch occupies residues 1742–1779; that stretch reads KSSSGSDGSGRSSPAPGIESGATTPPMSEEDQDKIVSS. Residues 1743 to 1754 show a composition bias toward low complexity; sequence SSSGSDGSGRSS. Residues 1781 to 2065 form a claisen cyclase domain region; sequence SLHQFQASST…YVSAFLARAL (285 aa). Catalysis depends on Ser-1875, which acts as the For Claisen cyclase activity.

It carries out the reaction 6 malonyl-CoA + acetyl-CoA + 6 H(+) = naphtopyrone YWA1 + 6 CO2 + 7 CoA + H2O. Its pathway is pigment biosynthesis. Functionally, non-reducing polyketide synthase; part of the gene cluster that mediates the biosynthesis of aurofusarin, a red mycelium pigment which is acting as a mycotoxin. The first step is performed by the polyketide synthase which condenses one acetyl-CoA and 6 malonyl-CoA units to form the first intermediate, the cyclic heptaketide and yellow pigment YWA1. The C2 hydroxyl group in the pyrone ring of YWA1 is probably formed during ring closure by an aldol-type cyclization reaction. The dehydratase aurZ then acts as the first tailoring enzyme in the aurofusarin biosynthetic pathway by converting YWA1 to nor-rubrofusarin. Nor-rubrofusarin is then methylated to rubrofusarin by the O-methyltransferase aurJ. Rubrofusarin is then transported across the plasma membrane by the rubrofusarin-specific pump aurT for further enzymatic processing by the extracellular complex composed of GIP1, aurF, aurO and aurS to yield aurofusarin. The sequence is that of Non-reducing polyketide synthase PKS12 from Gibberella zeae (strain ATCC MYA-4620 / CBS 123657 / FGSC 9075 / NRRL 31084 / PH-1) (Wheat head blight fungus).